Here is a 101-residue protein sequence, read N- to C-terminus: Small ribosomal subunit protein uS14 (101 aa).

Belongs to the universal ribosomal protein uS14 family. Part of the 30S ribosomal subunit. Contacts proteins S3 and S10.

Binds 16S rRNA, required for the assembly of 30S particles and may also be responsible for determining the conformation of the 16S rRNA at the A site. In Paraburkholderia phymatum (strain DSM 17167 / CIP 108236 / LMG 21445 / STM815) (Burkholderia phymatum), this protein is Small ribosomal subunit protein uS14.